Consider the following 108-residue polypeptide: uncharacterized protein (108 aa).

2 helical membrane-spanning segments follow: residues 32-52 (YFFF…LLAI) and 68-88 (SYLL…LVVG).

It localises to the membrane. This is an uncharacterized protein from Saccharomyces cerevisiae (strain ATCC 204508 / S288c) (Baker's yeast).